The primary structure comprises 296 residues: Malate--CoA ligase subunit alpha (296 aa).

CoA is bound by residues 17–20 (TGDK), lysine 43, and 96–98 (ITD). The active-site Tele-phosphohistidine intermediate is histidine 251.

The protein belongs to the succinate/malate CoA ligase alpha subunit family. As to quaternary structure, heterotetramer of two alpha and two beta subunits.

It carries out the reaction (S)-malate + ATP + CoA = (S)-malyl-CoA + ADP + phosphate. The protein operates within one-carbon metabolism; formaldehyde assimilation via serine pathway. This chain is Malate--CoA ligase subunit alpha (mtkB), found in Methylorubrum extorquens (strain ATCC 14718 / DSM 1338 / JCM 2805 / NCIMB 9133 / AM1) (Methylobacterium extorquens).